Here is a 498-residue protein sequence, read N- to C-terminus: Acetyl-coenzyme A carboxylase carboxyl transferase subunit beta, chloroplastic (498 aa).

The interval 36–59 is disordered; the sequence is SVNEDPIINDMDKDIPSGSDSDNS. One can recognise a CoA carboxyltransferase N-terminal domain in the interval 231–498; sequence LWVQCENCYG…FFPLNQNSIK (268 aa). C235, C238, C254, and C257 together coordinate Zn(2+). The C4-type zinc-finger motif lies at 235-257; the sequence is CENCYGLNYKRFLKSKMNICEHC.

It belongs to the AccD/PCCB family. As to quaternary structure, acetyl-CoA carboxylase is a heterohexamer composed of biotin carboxyl carrier protein, biotin carboxylase and 2 subunits each of ACCase subunit alpha and ACCase plastid-coded subunit beta (accD). Requires Zn(2+) as cofactor.

It is found in the plastid. The protein resides in the chloroplast stroma. The catalysed reaction is N(6)-carboxybiotinyl-L-lysyl-[protein] + acetyl-CoA = N(6)-biotinyl-L-lysyl-[protein] + malonyl-CoA. It participates in lipid metabolism; malonyl-CoA biosynthesis; malonyl-CoA from acetyl-CoA: step 1/1. In terms of biological role, component of the acetyl coenzyme A carboxylase (ACC) complex. Biotin carboxylase (BC) catalyzes the carboxylation of biotin on its carrier protein (BCCP) and then the CO(2) group is transferred by the transcarboxylase to acetyl-CoA to form malonyl-CoA. This Morus indica (Mulberry) protein is Acetyl-coenzyme A carboxylase carboxyl transferase subunit beta, chloroplastic.